We begin with the raw amino-acid sequence, 231 residues long: Ribose-5-phosphate isomerase A (231 aa).

Residues Thr-40–Thr-43, Asp-93–Asp-96, and Lys-106–Gly-109 contribute to the substrate site. The active-site Proton acceptor is the Glu-115. Lys-133 lines the substrate pocket.

The protein belongs to the ribose 5-phosphate isomerase family. In terms of assembly, homodimer.

It catalyses the reaction aldehydo-D-ribose 5-phosphate = D-ribulose 5-phosphate. It participates in carbohydrate degradation; pentose phosphate pathway; D-ribose 5-phosphate from D-ribulose 5-phosphate (non-oxidative stage): step 1/1. In terms of biological role, catalyzes the reversible conversion of ribose-5-phosphate to ribulose 5-phosphate. This is Ribose-5-phosphate isomerase A from Escherichia coli O6:K15:H31 (strain 536 / UPEC).